A 145-amino-acid polypeptide reads, in one-letter code: uncharacterized protein (145 aa).

This is an uncharacterized protein from Synechocystis sp. (strain ATCC 27184 / PCC 6803 / Kazusa).